The following is a 254-amino-acid chain: MFVDLNSDLGESFGSWKMGNDDQILPVVTSANIACGFHAGDPLGILKTVRKAVELGVTIGAHVSYPDLVGFGRRNMDLSRDELIADVLYQISALDGLAKVAGSKVQYVKPHGALYNTIAHDQAQAAAVIDAIKMYNPELVLVALAGSNLVEQARAAGLKVVSEAFADRAYNSDGSLVSRRLEGAVLHDSAFVASRVVSMLKNGGVESIDGVFTPIQADTICLHGDTDGALEMSAAIKAELVKNNIEIRPFVNKA.

This sequence belongs to the LamB/PxpA family. As to quaternary structure, forms a complex composed of PxpA, PxpB and PxpC.

It carries out the reaction 5-oxo-L-proline + ATP + 2 H2O = L-glutamate + ADP + phosphate + H(+). In terms of biological role, catalyzes the cleavage of 5-oxoproline to form L-glutamate coupled to the hydrolysis of ATP to ADP and inorganic phosphate. This Acinetobacter baumannii (strain ACICU) protein is 5-oxoprolinase subunit A.